The primary structure comprises 813 residues: Protein tramtrack, alpha isoform (813 aa).

Residues 33 to 98 enclose the BTB domain; that stretch reads TDVTLAVEGQ…MYRGEVSVDQ (66 aa). Disordered regions lie at residues 118 to 148, 171 to 324, 356 to 428, and 526 to 585; these read EVNDDKPSPAAAAAGAGATGSESTATTPQLQ, ANAG…GPSE, TTPA…MPKK, and AGLP…LDDQ. Residues 125 to 145 are compositionally biased toward low complexity; that stretch reads SPAAAAAGAGATGSESTATTP. Residues 176 to 187 are compositionally biased toward polar residues; it reads TPTLPVQPSLLS. The span at 192-201 shows a compositional bias: basic residues; sequence PKRKRGRPRK. Phosphoserine is present on residues Ser203, Ser205, and Ser206. Phosphothreonine is present on Thr209. The span at 254–285 shows a compositional bias: basic and acidic residues; the sequence is HTDDLNESRDSLPSKRSKNSKDHRVVSHHEDN. Polar residues-rich tracts occupy residues 302–324, 356–369, and 377–388; these read LFGSSSTTISATAPGGSSTGPSE, TTPAQQGSPQTPTK, and ATGSNNSNSLLK. Residues 560–578 show a composition bias toward basic residues; the sequence is SGKKGAKRPIQRRRVRRKA. 2 C2H2-type zinc fingers span residues 610–638 and 646–669; these read YRCTECAKENMQKTFKNKYSFQRHAFLYH and FPCPVCSKEFSRPDKMKNHLKMTH. Ser682 is modified (phosphoserine).

Interacts with CoRest/CG33525, suggesting that it acts by recruiting a CoRest-containing corepressor complex. Interacts with phyl.

Its subcellular location is the nucleus. Functionally, binds to a number of sites in the transcriptional regulatory region of ftz. Isoform alpha is required to repress genes that promote the R7 cell fate. Probable repressor of the transcription of the segmentation genes ftz, eve, h, odd, run, and en. May bind to the region 5'-AGGG[CT]GG-3'. Degradation of ttk is directed by binding of sinah or sina, via the adapter molecule phyl which binds to the BTB domain of ttk. This is Protein tramtrack, alpha isoform (ttk) from Drosophila melanogaster (Fruit fly).